The primary structure comprises 188 residues: ATP synthase subunit delta (188 aa).

The protein belongs to the ATPase delta chain family. F-type ATPases have 2 components, F(1) - the catalytic core - and F(0) - the membrane proton channel. F(1) has five subunits: alpha(3), beta(3), gamma(1), delta(1), epsilon(1). F(0) has three main subunits: a(1), b(2) and c(10-14). The alpha and beta chains form an alternating ring which encloses part of the gamma chain. F(1) is attached to F(0) by a central stalk formed by the gamma and epsilon chains, while a peripheral stalk is formed by the delta and b chains.

The protein localises to the cell inner membrane. F(1)F(0) ATP synthase produces ATP from ADP in the presence of a proton or sodium gradient. F-type ATPases consist of two structural domains, F(1) containing the extramembraneous catalytic core and F(0) containing the membrane proton channel, linked together by a central stalk and a peripheral stalk. During catalysis, ATP synthesis in the catalytic domain of F(1) is coupled via a rotary mechanism of the central stalk subunits to proton translocation. Its function is as follows. This protein is part of the stalk that links CF(0) to CF(1). It either transmits conformational changes from CF(0) to CF(1) or is implicated in proton conduction. The protein is ATP synthase subunit delta of Rhizobium etli (strain ATCC 51251 / DSM 11541 / JCM 21823 / NBRC 15573 / CFN 42).